A 729-amino-acid chain; its full sequence is Glycine--tRNA ligase, mitochondrial 1 (729 aa).

At Met-1 the chain carries N-acetylmethionine. Residues 1 to 28 (MRIFSTFVFHRRQQIFNLRQFQTTTILR) constitute a mitochondrion transit peptide. The WHEP-TRS domain maps to 50–106 (SLSEKSSSVEAQGNAVRALKASRAAKPEIDAAIEQLNKLKLEKSTVEKELQSIISSS). A glycine-binding site is contributed by Glu-296. ATP is bound by residues 328 to 330 (RNE) and 339 to 340 (RV). Glu-347 contributes to the glycine binding site. 454 to 455 (EC) is a binding site for ATP. 575–577 (EPS) is a glycine binding site. Arg-582 serves as a coordination point for ATP.

It belongs to the class-II aminoacyl-tRNA synthetase family. In terms of assembly, homodimer.

Its subcellular location is the mitochondrion. It is found in the cytoplasm. The protein localises to the cytosol. It catalyses the reaction tRNA(Gly) + glycine + ATP = glycyl-tRNA(Gly) + AMP + diphosphate. It carries out the reaction 2 ATP + H(+) = P(1),P(4)-bis(5'-adenosyl) tetraphosphate + diphosphate. In terms of biological role, catalyzes the ATP-dependent ligation of glycine to the 3'-end of its cognate tRNA, via the formation of an aminoacyl-adenylate intermediate (Gly-AMP). Also produces diadenosine tetraphosphate (Ap4A), a universal pleiotropic signaling molecule needed for cell regulation pathways, by direct condensation of 2 ATPs. Thereby, may play a special role in Ap4A homeostasis. The sequence is that of Glycine--tRNA ligase, mitochondrial 1 from Arabidopsis thaliana (Mouse-ear cress).